We begin with the raw amino-acid sequence, 335 residues long: N-acetylmuramoyl-L-alanine amidase sle1 (335 aa).

Positions 1–25 (MQKKVIAAIIGTSAISAVAATQANA) are cleaved as a signal peptide. The region spanning 27–70 (TTHTVKPGESVWAISNKYGISIAKLKSLNNLTSNLIFPNQVLKV) is the LysM 1 domain. Residues 71–86 (SGSSNSTSNSSRPSTN) show a composition bias toward low complexity. Residues 71-90 (SGSSNSTSNSSRPSTNSGGG) are disordered. LysM domains follow at residues 91-134 (SYYT…KLKV) and 158-201 (SYYT…KLKV). In terms of domain architecture, Peptidase C51 spans 211–335 (ASATTTNRGY…YQVNNYRYIH (125 aa)).

Its subcellular location is the secreted. It is found in the cell surface. The enzyme catalyses Hydrolyzes the link between N-acetylmuramoyl residues and L-amino acid residues in certain cell-wall glycopeptides.. Functionally, peptidoglycan hydrolase involved in the splitting of the septum during cell division. The chain is N-acetylmuramoyl-L-alanine amidase sle1 (sle1) from Staphylococcus aureus (strain bovine RF122 / ET3-1).